We begin with the raw amino-acid sequence, 85 residues long: Translation initiation factor IF-1 2 (85 aa).

An S1-like domain is found at 1–72 (MAKEELIEMH…SKGRITFRHI (72 aa)).

It belongs to the IF-1 family. In terms of assembly, component of the 30S ribosomal translation pre-initiation complex which assembles on the 30S ribosome in the order IF-2 and IF-3, IF-1 and N-formylmethionyl-tRNA(fMet); mRNA recruitment can occur at any time during PIC assembly.

The protein localises to the cytoplasm. Its function is as follows. One of the essential components for the initiation of protein synthesis. Stabilizes the binding of IF-2 and IF-3 on the 30S subunit to which N-formylmethionyl-tRNA(fMet) subsequently binds. Helps modulate mRNA selection, yielding the 30S pre-initiation complex (PIC). Upon addition of the 50S ribosomal subunit IF-1, IF-2 and IF-3 are released leaving the mature 70S translation initiation complex. The protein is Translation initiation factor IF-1 2 of Polaromonas sp. (strain JS666 / ATCC BAA-500).